The chain runs to 593 residues: Aspartate--tRNA ligase (593 aa).

Glu180 contacts L-aspartate. Residues 204–207 (QIFK) form an aspartate region. L-aspartate is bound at residue Arg226. ATP-binding positions include 226–228 (RDE) and Gln235. His453 contributes to the L-aspartate binding site. Position 487 (Glu487) interacts with ATP. Position 494 (Arg494) interacts with L-aspartate. 539–542 (GLDR) contributes to the ATP binding site.

Belongs to the class-II aminoacyl-tRNA synthetase family. Type 1 subfamily. Homodimer.

Its subcellular location is the cytoplasm. The catalysed reaction is tRNA(Asp) + L-aspartate + ATP = L-aspartyl-tRNA(Asp) + AMP + diphosphate. In terms of biological role, catalyzes the attachment of L-aspartate to tRNA(Asp) in a two-step reaction: L-aspartate is first activated by ATP to form Asp-AMP and then transferred to the acceptor end of tRNA(Asp). This Clostridium botulinum (strain 657 / Type Ba4) protein is Aspartate--tRNA ligase.